A 582-amino-acid chain; its full sequence is Aspartate--tRNA(Asp/Asn) ligase (582 aa).

Residue glutamate 177 coordinates L-aspartate. Positions 201 to 204 (QLFK) are aspartate. L-aspartate is bound at residue arginine 223. ATP-binding positions include 223–225 (RDE) and glutamine 232. Histidine 447 contributes to the L-aspartate binding site. Glutamate 481 lines the ATP pocket. An L-aspartate-binding site is contributed by arginine 488. Residue 533-536 (GLDR) participates in ATP binding.

This sequence belongs to the class-II aminoacyl-tRNA synthetase family. Type 1 subfamily. As to quaternary structure, homodimer.

The protein localises to the cytoplasm. The enzyme catalyses tRNA(Asx) + L-aspartate + ATP = L-aspartyl-tRNA(Asx) + AMP + diphosphate. In terms of biological role, aspartyl-tRNA synthetase with relaxed tRNA specificity since it is able to aspartylate not only its cognate tRNA(Asp) but also tRNA(Asn). Reaction proceeds in two steps: L-aspartate is first activated by ATP to form Asp-AMP and then transferred to the acceptor end of tRNA(Asp/Asn). In Chlamydia muridarum (strain MoPn / Nigg), this protein is Aspartate--tRNA(Asp/Asn) ligase.